The primary structure comprises 461 residues: Glutamate--tRNA ligase (461 aa).

The 'HIGH' region signature appears at 8–18 (PSPTGYLHIGG). Positions 240–244 (KMSKR) match the 'KMSKS' region motif. Lysine 243 lines the ATP pocket.

This sequence belongs to the class-I aminoacyl-tRNA synthetase family. Glutamate--tRNA ligase type 1 subfamily. Monomer.

The protein localises to the cytoplasm. The catalysed reaction is tRNA(Glu) + L-glutamate + ATP = L-glutamyl-tRNA(Glu) + AMP + diphosphate. Functionally, catalyzes the attachment of glutamate to tRNA(Glu) in a two-step reaction: glutamate is first activated by ATP to form Glu-AMP and then transferred to the acceptor end of tRNA(Glu). In Chromobacterium violaceum (strain ATCC 12472 / DSM 30191 / JCM 1249 / CCUG 213 / NBRC 12614 / NCIMB 9131 / NCTC 9757 / MK), this protein is Glutamate--tRNA ligase.